The primary structure comprises 338 residues: Fructose-1,6-bisphosphatase class 1 (338 aa).

Mg(2+) contacts are provided by glutamate 91, aspartate 113, leucine 115, and aspartate 116. Substrate contacts are provided by residues 116–119 (DGSS), asparagine 208, and lysine 274. Glutamate 280 lines the Mg(2+) pocket.

It belongs to the FBPase class 1 family. Homotetramer. The cofactor is Mg(2+).

It is found in the cytoplasm. It catalyses the reaction beta-D-fructose 1,6-bisphosphate + H2O = beta-D-fructose 6-phosphate + phosphate. The protein operates within carbohydrate biosynthesis; gluconeogenesis. The protein is Fructose-1,6-bisphosphatase class 1 of Ralstonia nicotianae (strain ATCC BAA-1114 / GMI1000) (Ralstonia solanacearum).